We begin with the raw amino-acid sequence, 312 residues long: Ornithine carbamoyltransferase (312 aa).

Residues 57–60 (STRT), Gln84, Arg108, and 135–138 (HPCQ) each bind carbamoyl phosphate. Residues Asn166, Asp226, and 230–231 (SM) each bind L-ornithine. Carbamoyl phosphate-binding positions include 265–266 (CL) and Arg293.

This sequence belongs to the aspartate/ornithine carbamoyltransferase superfamily. OTCase family.

The protein localises to the cytoplasm. The enzyme catalyses carbamoyl phosphate + L-ornithine = L-citrulline + phosphate + H(+). The protein operates within amino-acid degradation; L-arginine degradation via ADI pathway; carbamoyl phosphate from L-arginine: step 2/2. Reversibly catalyzes the transfer of the carbamoyl group from carbamoyl phosphate (CP) to the N(epsilon) atom of ornithine (ORN) to produce L-citrulline. This is Ornithine carbamoyltransferase from Brucella abortus (strain 2308).